Reading from the N-terminus, the 396-residue chain is Elongation factor Tu (396 aa).

One can recognise a tr-type G domain in the interval 10–206 (KPHVNVGTIG…ALDSYIPTPK (197 aa)). The interval 19–26 (GHVDHGKT) is G1. Residue 19 to 26 (GHVDHGKT) participates in GTP binding. Thr-26 lines the Mg(2+) pocket. The tract at residues 60–64 (GITIS) is G2. A G3 region spans residues 81 to 84 (DCPG). GTP-binding positions include 81–85 (DCPGH) and 136–139 (NKAD). Positions 136 to 139 (NKAD) are G4. The tract at residues 174–176 (SAL) is G5.

This sequence belongs to the TRAFAC class translation factor GTPase superfamily. Classic translation factor GTPase family. EF-Tu/EF-1A subfamily. As to quaternary structure, monomer.

The protein localises to the cytoplasm. The catalysed reaction is GTP + H2O = GDP + phosphate + H(+). GTP hydrolase that promotes the GTP-dependent binding of aminoacyl-tRNA to the A-site of ribosomes during protein biosynthesis. The sequence is that of Elongation factor Tu from Vesicomyosocius okutanii subsp. Calyptogena okutanii (strain HA).